We begin with the raw amino-acid sequence, 240 residues long: Hairy and enhancer of split-related protein HELT (240 aa).

One can recognise a bHLH domain in the interval 10 to 65 (RTPVSHKVIEKRRRDRINRCLNELGKTVPMALAKQSSGKLEKAEILEMTVQYLRAL). Position 48 is an N6-acetyllysine (K48). Residues 86 to 121 (FHYGYHECMKNLVHYLTTVERMETKDTKYARILAFL) enclose the Orange domain.

This sequence belongs to the HEY family. In terms of assembly, self-associates. Interacts with HES5 and HEY2. As to expression, expressed in heart and testis.

Its subcellular location is the nucleus. In terms of biological role, transcriptional repressor which binds preferentially to the canonical E box sequence 5'-CACGCG-3'. Required for the development of GABAergic neurons. The chain is Hairy and enhancer of split-related protein HELT (Helt) from Mus musculus (Mouse).